We begin with the raw amino-acid sequence, 405 residues long: Deoxyguanosinetriphosphate triphosphohydrolase-like protein (405 aa).

The region spanning 75–219 is the HD domain; the sequence is RLTHTIEVAQ…AAVADDIAYN (145 aa).

It belongs to the dGTPase family. Type 2 subfamily.

This is Deoxyguanosinetriphosphate triphosphohydrolase-like protein from Allorhizobium ampelinum (strain ATCC BAA-846 / DSM 112012 / S4) (Agrobacterium vitis (strain S4)).